The chain runs to 194 residues: MSREALQETLSAVMDNEADELELRRVLAACGEDAELRSTWSRYQLARSVMHREPTLPKLDIAAAVSAALADEAAPPKAEKGPWRMVGRLAVAASVTLAVLAGVRLYNQNDALPQMAQQGTTPQIALPQVKGPAVLAGYSEEQGAPQVITNSSSSDTRWHEQRLPIYLRQHVQQSAVSGTESALPYARAASLENR.

Residues 89 to 105 form a helical membrane-spanning segment; sequence LAVAASVTLAVLAGVRL.

Belongs to the RseA family.

Its subcellular location is the cell membrane. Functionally, negative regulator of the sigma factor AlgU. Plays a role in the differentiation of P.aeruginosa into the alginate-producing form. Inactivation of mucA causes a switch from the non-mucoid to mucoid state resulting in constitutive expression of alginate biosynthetic genes. The protein is Sigma factor AlgU negative regulatory protein (mucA) of Pseudomonas aeruginosa (strain ATCC 15692 / DSM 22644 / CIP 104116 / JCM 14847 / LMG 12228 / 1C / PRS 101 / PAO1).